The sequence spans 115 residues: Large ribosomal subunit protein bL20 (115 aa).

The protein belongs to the bacterial ribosomal protein bL20 family.

Its function is as follows. Binds directly to 23S ribosomal RNA and is necessary for the in vitro assembly process of the 50S ribosomal subunit. It is not involved in the protein synthesizing functions of that subunit. The protein is Large ribosomal subunit protein bL20 of Cytophaga hutchinsonii (strain ATCC 33406 / DSM 1761 / CIP 103989 / NBRC 15051 / NCIMB 9469 / D465).